Reading from the N-terminus, the 150-residue chain is Large ribosomal subunit protein eL19 (150 aa).

The segment at 56–89 (KGQSRARARAFQEARKKGRHRGPGSKKGKKTARM) is disordered. Basic residues predominate over residues 71–89 (KKGRHRGPGSKKGKKTARM).

The protein belongs to the eukaryotic ribosomal protein eL19 family. Part of the 50S ribosomal subunit.

Functionally, binds to the 23S rRNA. The protein is Large ribosomal subunit protein eL19 of Thermococcus kodakarensis (strain ATCC BAA-918 / JCM 12380 / KOD1) (Pyrococcus kodakaraensis (strain KOD1)).